A 433-amino-acid chain; its full sequence is tRNA (guanine(10)-N(2))-methyltransferase (433 aa).

It belongs to the class I-like SAM-binding methyltransferase superfamily. TRM11 methyltransferase family. In terms of assembly, interacts with TRM112.

Its subcellular location is the cytoplasm. It catalyses the reaction guanosine(10) in tRNA + S-adenosyl-L-methionine = N(2)-methylguanosine(10) in tRNA + S-adenosyl-L-homocysteine + H(+). Its function is as follows. Catalytic subunit of an S-adenosyl-L-methionine-dependent tRNA methyltransferase complex that mediates the methylation of the guanosine nucleotide at position 10 (m2G10) in tRNAs. This Saccharomyces cerevisiae (strain ATCC 204508 / S288c) (Baker's yeast) protein is tRNA (guanine(10)-N(2))-methyltransferase (TRM11).